The following is a 356-amino-acid chain: Isopentenyl-diphosphate delta-isomerase (356 aa).

8-9 (RK) contacts substrate. FMN is bound by residues 66 to 68 (AIT), serine 96, and asparagine 124. Position 96-98 (96-98 (SQR)) interacts with substrate. Residue glutamine 160 participates in substrate binding. A Mg(2+)-binding site is contributed by glutamate 161. FMN is bound by residues lysine 201, threonine 231, 280-282 (GIR), and 301-302 (AL).

The protein belongs to the IPP isomerase type 2 family. In terms of assembly, homooctamer. Dimer of tetramers. It depends on FMN as a cofactor. Requires NADPH as cofactor. Mg(2+) is required as a cofactor.

It is found in the cytoplasm. It catalyses the reaction isopentenyl diphosphate = dimethylallyl diphosphate. Functionally, involved in the biosynthesis of isoprenoids. Catalyzes the 1,3-allylic rearrangement of the homoallylic substrate isopentenyl (IPP) to its allylic isomer, dimethylallyl diphosphate (DMAPP). The protein is Isopentenyl-diphosphate delta-isomerase of Methanococcus aeolicus (strain ATCC BAA-1280 / DSM 17508 / OCM 812 / Nankai-3).